A 2175-amino-acid chain; its full sequence is Non-reducing polyketide synthase PKS1 (2175 aa).

An N-terminal acylcarrier protein transacylase domain (SAT) region spans residues 5–242; that stretch reads LLFGDQTAEQ…VSIPIYGPYH (238 aa). A Ketosynthase family 3 (KS3) domain is found at 369–801; that stretch reads TDKIAIVGMA…GGNTALLIED (433 aa). Residues cysteine 541, histidine 676, and histidine 719 each act as for beta-ketoacyl synthase activity in the active site. Residues 900–1212 form a malonyl-CoA:ACP transacylase (MAT) domain region; the sequence is FCFTGQGSQY…ISTSICHLFT (313 aa). The active-site For acyl/malonyl transferase activity is the serine 988. Positions 1285–1604 are product template (PT) domain; it reads STSCQNVISE…RKVLNVFLPP (320 aa). The interval 1289–1424 is N-terminal hotdog fold; that stretch reads QNVISEEFDG…CTIRYEDKAV (136 aa). A PKS/mFAS DH domain is found at 1289 to 1599; the sequence is QNVISEEFDG…FQQIPRKVLN (311 aa). Residue histidine 1321 is the Proton acceptor; for dehydratase activity of the active site. The C-terminal hotdog fold stretch occupies residues 1452–1599; that stretch reads AHKVQRGMAY…FQQIPRKVLN (148 aa). Residue aspartate 1512 is the Proton donor; for dehydratase activity of the active site. The tract at residues 1640-1664 is disordered; the sequence is PVRKSAGPAKAAAAPSMPKPSKVAA. Over residues 1643-1664 the composition is skewed to low complexity; sequence KSAGPAKAAAAPSMPKPSKVAA. One can recognise a Carrier 1 domain in the interval 1666-1743; sequence KPAGSMVDKV…EMKKYFSQFN (78 aa). An O-(pantetheine 4'-phosphoryl)serine modification is found at serine 1703. Positions 1766 to 1804 are disordered; it reads ATPFDEMSTPASSAPSVPQSDAGKPSPDSPTGDSLSDDV. The segment covering 1774–1784 has biased composition (polar residues); it reads TPASSAPSVPQ. A Carrier 2 domain is found at 1801–1878; the sequence is SDDVGDVSIA…DIENALGMRP (78 aa). At serine 1838 the chain carries O-(pantetheine 4'-phosphoryl)serine. The disordered stretch occupies residues 1879 to 1899; the sequence is KPKAVGPKLSKPSTKTDMNEV. Residues 1889-1899 show a composition bias toward polar residues; it reads KPSTKTDMNEV. The tract at residues 1932 to 2158 is claisen cyclase domain; it reads KVFFLPDGSG…GHHFSMMKDP (227 aa). The For Claisen cyclase activity role is filled by serine 2002.

Pantetheine 4'-phosphate is required as a cofactor.

The enzyme catalyses 6 malonyl-CoA + acetyl-CoA + 6 H(+) = naphtopyrone YWA1 + 6 CO2 + 7 CoA + H2O. The protein operates within pigment biosynthesis; melanin biosynthesis. Its function is as follows. Non-reducing polyketide synthase; part of the gene cluster 29 that mediates the biosynthesis of mediates the biosynthesis of dihydroxynaphthalene (DHN)-melanin, a bluish-green pigment and a structural component of the conidial wall. The first step of the pathway is the production of the heptaketide naphtopyrone YWA1 by the polyketide synthase PKS1 though condensation of acetyl-CoA with malonyl-CoA. The chain is Non-reducing polyketide synthase PKS1 from Zymoseptoria tritici (strain CBS 115943 / IPO323) (Speckled leaf blotch fungus).